The primary structure comprises 296 residues: Glycine--tRNA ligase alpha subunit (296 aa).

It belongs to the class-II aminoacyl-tRNA synthetase family. In terms of assembly, tetramer of two alpha and two beta subunits.

It is found in the cytoplasm. The catalysed reaction is tRNA(Gly) + glycine + ATP = glycyl-tRNA(Gly) + AMP + diphosphate. The polypeptide is Glycine--tRNA ligase alpha subunit (Synechococcus sp. (strain CC9605)).